A 309-amino-acid chain; its full sequence is MKKIASVLALFVALLFGLLACSKGSSSGASGKLKVVTTNSILADITKNIAGDKIELHSIVPVGKDPHEYEPLPEDVKKTSQADLIFYNGINLETGGNAWFTKLVKNANKVENKDYFAVSEGVDVIYLEGQNQAGKEDPHAWLNLENGILYAKNIAKQLIAKDPKNKDFYEKNLAAYTEKLSKLDQKAKQAFKNIPEDKKMIVTSEGCFKYFSKAYGVPSAYIWEINTEEEGTPEQIKTLVEKLRQTKVPALFVESSVDERPMKTVAKDTNIPIYAKIFTDSIAKEGEKGDSYYSMMKWNLDKIAEGLSQ.

The signal sequence occupies residues 1-20; the sequence is MKKIASVLALFVALLFGLLA. C21 is lipidated: N-palmitoyl cysteine. A lipid anchor (S-diacylglycerol cysteine) is attached at C21. The a divalent metal cation site is built by H67, H139, E205, and D280.

Belongs to the bacterial solute-binding protein 9 family. Lipoprotein receptor antigen (Lrai) subfamily.

The protein resides in the cell membrane. Functionally, part of an ATP-binding cassette (ABC) transport system involved in metal import. Binds a metal with high affinity and specificity and delivers it to the membrane permease for translocation into the cytoplasm. Also acts as an adhesin which is involved on adherence to extracellular matrix. It is an important factor in pathogenesis and infection. May contribute to the formation and accumulation of dental plaque. The polypeptide is Metal ABC transporter substrate-binding lipoprotein FimA (fimA) (Streptococcus parasanguinis).